Reading from the N-terminus, the 596-residue chain is NADH-quinone oxidoreductase subunit C/D (596 aa).

Positions Met1–Gln186 are NADH dehydrogenase I subunit C. The NADH dehydrogenase I subunit D stretch occupies residues Asp210–Arg596.

This sequence in the N-terminal section; belongs to the complex I 30 kDa subunit family. The protein in the C-terminal section; belongs to the complex I 49 kDa subunit family. As to quaternary structure, NDH-1 is composed of 13 different subunits. Subunits NuoB, CD, E, F, and G constitute the peripheral sector of the complex.

The protein localises to the cell inner membrane. The enzyme catalyses a quinone + NADH + 5 H(+)(in) = a quinol + NAD(+) + 4 H(+)(out). Its function is as follows. NDH-1 shuttles electrons from NADH, via FMN and iron-sulfur (Fe-S) centers, to quinones in the respiratory chain. The immediate electron acceptor for the enzyme in this species is believed to be ubiquinone. Couples the redox reaction to proton translocation (for every two electrons transferred, four hydrogen ions are translocated across the cytoplasmic membrane), and thus conserves the redox energy in a proton gradient. The polypeptide is NADH-quinone oxidoreductase subunit C/D (Shigella flexneri serotype 5b (strain 8401)).